A 584-amino-acid chain; its full sequence is Protein spire homolog 1 (584 aa).

Residues methionine 1–arginine 30 are disordered. The 73-residue stretch at methionine 1–leucine 73 folds into the KIND domain. The span at glycine 9–glutamate 28 shows a compositional bias: acidic residues. Residues methionine 71–serine 99 are a coiled coil. WH2 domains lie at proline 147–valine 165 and leucine 211–valine 228. Residues lysine 224–leucine 238 show a composition bias toward basic and acidic residues. The segment at lysine 224–proline 366 is disordered. Serine 229 carries the post-translational modification Phosphoserine. Residues threonine 242–glutamate 272 are compositionally biased toward polar residues. Phosphoserine is present on residues serine 292, serine 293, and serine 295. Low complexity predominate over residues lysine 302–glutamate 320. At threonine 337 the chain carries Phosphothreonine. Positions proline 340 to threonine 356 are enriched in basic and acidic residues. Polar residues predominate over residues proline 357 to proline 366. A spir-box region spans residues leucine 384–glutamate 404. Phosphoserine is present on residues serine 506, serine 510, and serine 563.

It belongs to the spire family. As to quaternary structure, interacts with FMN2.

It is found in the cytoplasm. Its subcellular location is the cytoskeleton. The protein resides in the cytosol. The protein localises to the cleavage furrow. It localises to the perinuclear region. It is found in the cell membrane. Its subcellular location is the cytoplasmic vesicle membrane. Its function is as follows. Acts as an actin nucleation factor, remains associated with the slow-growing pointed end of the new filament. Involved in intracellular vesicle transport along actin fibers, providing a novel link between actin cytoskeleton dynamics and intracellular transport. Required for asymmetric spindle positioning and asymmetric cell division during meiosis. Required for normal formation of the cleavage furrow and for polar body extrusion during female germ cell meiosis. Also acts in the nucleus: together with FMN2, promotes assembly of nuclear actin filaments in response to DNA damage in order to facilitate movement of chromatin and repair factors after DNA damage. In addition, promotes innate immune signaling downstream of dsRNA sensing. Mechanistically, contributes to IRF3 phosphorylation and activation downstream of MAVS and upstream of TBK1. In Macaca fascicularis (Crab-eating macaque), this protein is Protein spire homolog 1 (SPIRE1).